A 923-amino-acid polypeptide reads, in one-letter code: Alanine--tRNA ligase (923 aa).

4 residues coordinate Zn(2+): H611, H615, C714, and H718. Residues 886 to 903 (VGGGGGGRPNMARGGGTD) are compositionally biased toward gly residues. The disordered stretch occupies residues 886–909 (VGGGGGGRPNMARGGGTDPSGMDN).

It belongs to the class-II aminoacyl-tRNA synthetase family. The cofactor is Zn(2+).

It is found in the cytoplasm. It carries out the reaction tRNA(Ala) + L-alanine + ATP = L-alanyl-tRNA(Ala) + AMP + diphosphate. Functionally, catalyzes the attachment of alanine to tRNA(Ala) in a two-step reaction: alanine is first activated by ATP to form Ala-AMP and then transferred to the acceptor end of tRNA(Ala). Also edits incorrectly charged Ser-tRNA(Ala) and Gly-tRNA(Ala) via its editing domain. This Methanococcoides burtonii (strain DSM 6242 / NBRC 107633 / OCM 468 / ACE-M) protein is Alanine--tRNA ligase.